Consider the following 395-residue polypeptide: Acetylornithine aminotransferase (395 aa).

Pyridoxal 5'-phosphate is bound by residues 117 to 118 and Phe-144; that span reads GA. Residue Arg-147 participates in N(2)-acetyl-L-ornithine binding. 230–233 lines the pyridoxal 5'-phosphate pocket; it reads DEVQ. N6-(pyridoxal phosphate)lysine is present on Lys-259. Position 285 (Ser-285) interacts with N(2)-acetyl-L-ornithine. Residue Thr-286 coordinates pyridoxal 5'-phosphate.

This sequence belongs to the class-III pyridoxal-phosphate-dependent aminotransferase family. ArgD subfamily. As to quaternary structure, homodimer. It depends on pyridoxal 5'-phosphate as a cofactor.

Its subcellular location is the cytoplasm. It catalyses the reaction N(2)-acetyl-L-ornithine + 2-oxoglutarate = N-acetyl-L-glutamate 5-semialdehyde + L-glutamate. Its pathway is amino-acid biosynthesis; L-arginine biosynthesis; N(2)-acetyl-L-ornithine from L-glutamate: step 4/4. This chain is Acetylornithine aminotransferase, found in Methanosarcina acetivorans (strain ATCC 35395 / DSM 2834 / JCM 12185 / C2A).